Consider the following 125-residue polypeptide: Glutaredoxin-C1 (125 aa).

Positions 19 to 119 constitute a Glutaredoxin domain; sequence VNKAKEIVSA…PLLTEAGAIA (101 aa). Cys39 and Cys42 are joined by a disulfide.

It belongs to the glutaredoxin family. CPYC subfamily.

It localises to the cytoplasm. Its function is as follows. Has a glutathione-disulfide oxidoreductase activity in the presence of NADPH and glutathione reductase. Reduces low molecular weight disulfides and proteins. The sequence is that of Glutaredoxin-C1 (GRXC1) from Arabidopsis thaliana (Mouse-ear cress).